We begin with the raw amino-acid sequence, 65 residues long: Large ribosomal subunit protein bL35 (65 aa).

Belongs to the bacterial ribosomal protein bL35 family.

The sequence is that of Large ribosomal subunit protein bL35 from Prochlorococcus marinus subsp. pastoris (strain CCMP1986 / NIES-2087 / MED4).